The primary structure comprises 458 residues: UDP-N-acetylmuramate--L-alanine ligase (458 aa).

An ATP-binding site is contributed by 112–118; sequence GTHGKTT.

It belongs to the MurCDEF family.

It localises to the cytoplasm. The catalysed reaction is UDP-N-acetyl-alpha-D-muramate + L-alanine + ATP = UDP-N-acetyl-alpha-D-muramoyl-L-alanine + ADP + phosphate + H(+). Its pathway is cell wall biogenesis; peptidoglycan biosynthesis. Cell wall formation. This is UDP-N-acetylmuramate--L-alanine ligase from Geotalea daltonii (strain DSM 22248 / JCM 15807 / FRC-32) (Geobacter daltonii).